A 753-amino-acid chain; its full sequence is Neuroendocrine convertase 1 (753 aa).

The N-terminal stretch at 1-27 (MGRRAWTLQCTAFSLFCAWCAMNSVKA) is a signal peptide. Residues 28–110 (KKQFVNEWAA…QQYEKERSKR (83 aa)) constitute a propeptide that is removed on maturation. The region spanning 129–450 (QWYLQDTRMT…FGLLNAKALV (322 aa)) is the Peptidase S8 domain. Asp167 acts as the Charge relay system in catalysis. N-linked (GlcNAc...) asparagine glycosylation is present at Asn173. His208 (charge relay system) is an active-site residue. 2 cysteine pairs are disulfide-bonded: Cys225–Cys374 and Cys317–Cys347. The active-site Charge relay system is the Ser382. Asn401 carries N-linked (GlcNAc...) asparagine glycosylation. The P/Homo B domain maps to 460-597 (SVPEKKECVV…KLILHGTSSQ (138 aa)). Residues Cys467 and Cys494 are joined by a disulfide bond. Disordered regions lie at residues 617–657 (RRGV…RRDE) and 676–695 (SKNS…KPNI).

Belongs to the peptidase S8 family. Furin subfamily. Requires Ca(2+) as cofactor.

It localises to the cytoplasmic vesicle. The protein resides in the secretory vesicle. The enzyme catalyses Release of protein hormones, neuropeptides and renin from their precursors, generally by hydrolysis of -Lys-Arg-|- bonds.. In terms of biological role, involved in the processing of hormone and other protein precursors at sites comprised of pairs of basic amino acid residues. Substrates include POMC, renin, enkephalin, dynorphin, somatostatin, insulin and AGRP. This chain is Neuroendocrine convertase 1 (PCSK1), found in Bos taurus (Bovine).